We begin with the raw amino-acid sequence, 813 residues long: Ankyrin repeat domain-containing protein SOWAHB (813 aa).

Disordered stretches follow at residues 142-256 (SAAP…QSLS) and 400-436 (ETCGSEESDSGEGGDCDTEPRDNDDADDDTFSSDSHK). Over residues 158–176 (MSEKARVNPSHWDTKRYYP) the composition is skewed to basic and acidic residues. Residues 177 to 189 (EDPPVPDSLPVSP) show a composition bias toward pro residues. Residues 191–202 (CTNTRQSSFTST) are compositionally biased toward polar residues. Low complexity predominate over residues 208–244 (HSLSSNNLSSSFSSPESPGLVAKPYNASPSPAGSSPN). The segment covering 245 to 256 (IREQTPKSQSLS) has biased composition (polar residues). Positions 400–416 (ETCGSEESDSGEGGDCD) are enriched in acidic residues. 2 ANK repeats span residues 657–686 (TGYTALHWFAKHGCIDLFNKVVIGAKKAGI) and 696–726 (NGYTPLHIAAIHGHHKVAIMLVEKLKVNVKV).

The protein belongs to the SOWAH family.

In Xenopus laevis (African clawed frog), this protein is Ankyrin repeat domain-containing protein SOWAHB (sowahb).